Here is a 433-residue protein sequence, read N- to C-terminus: Serine hydroxymethyltransferase (433 aa).

(6S)-5,6,7,8-tetrahydrofolate is bound by residues L133 and 137–139; that span reads GHL. K242 carries the N6-(pyridoxal phosphate)lysine modification. 366–368 provides a ligand contact to (6S)-5,6,7,8-tetrahydrofolate; sequence SPF.

This sequence belongs to the SHMT family. Homodimer. Pyridoxal 5'-phosphate is required as a cofactor.

It localises to the cytoplasm. It catalyses the reaction (6R)-5,10-methylene-5,6,7,8-tetrahydrofolate + glycine + H2O = (6S)-5,6,7,8-tetrahydrofolate + L-serine. It functions in the pathway one-carbon metabolism; tetrahydrofolate interconversion. The protein operates within amino-acid biosynthesis; glycine biosynthesis; glycine from L-serine: step 1/1. Catalyzes the reversible interconversion of serine and glycine with tetrahydrofolate (THF) serving as the one-carbon carrier. This reaction serves as the major source of one-carbon groups required for the biosynthesis of purines, thymidylate, methionine, and other important biomolecules. Also exhibits THF-independent aldolase activity toward beta-hydroxyamino acids, producing glycine and aldehydes, via a retro-aldol mechanism. The protein is Serine hydroxymethyltransferase of Beijerinckia indica subsp. indica (strain ATCC 9039 / DSM 1715 / NCIMB 8712).